Here is a 302-residue protein sequence, read N- to C-terminus: Phosphoribosylaminoimidazole-succinocarboxamide synthase (302 aa).

It belongs to the SAICAR synthetase family.

It carries out the reaction 5-amino-1-(5-phospho-D-ribosyl)imidazole-4-carboxylate + L-aspartate + ATP = (2S)-2-[5-amino-1-(5-phospho-beta-D-ribosyl)imidazole-4-carboxamido]succinate + ADP + phosphate + 2 H(+). It participates in purine metabolism; IMP biosynthesis via de novo pathway; 5-amino-1-(5-phospho-D-ribosyl)imidazole-4-carboxamide from 5-amino-1-(5-phospho-D-ribosyl)imidazole-4-carboxylate: step 1/2. The polypeptide is Phosphoribosylaminoimidazole-succinocarboxamide synthase (Cupriavidus metallidurans (strain ATCC 43123 / DSM 2839 / NBRC 102507 / CH34) (Ralstonia metallidurans)).